We begin with the raw amino-acid sequence, 104 residues long: Large ribosomal subunit protein uL24 (104 aa).

The protein belongs to the universal ribosomal protein uL24 family. In terms of assembly, part of the 50S ribosomal subunit.

In terms of biological role, one of two assembly initiator proteins, it binds directly to the 5'-end of the 23S rRNA, where it nucleates assembly of the 50S subunit. One of the proteins that surrounds the polypeptide exit tunnel on the outside of the subunit. The protein is Large ribosomal subunit protein uL24 of Clostridium perfringens (strain ATCC 13124 / DSM 756 / JCM 1290 / NCIMB 6125 / NCTC 8237 / Type A).